A 701-amino-acid polypeptide reads, in one-letter code: DNA ligase (701 aa).

NAD(+) contacts are provided by residues 43–47 (DADYD), 92–93 (SL), and Glu-126. Lys-128 (N6-AMP-lysine intermediate) is an active-site residue. Residues Arg-149, Glu-186, Lys-302, and Lys-326 each contribute to the NAD(+) site. Positions 417, 420, 440, and 446 each coordinate Zn(2+). A BRCT domain is found at 622-701 (ETGSPVTGKT…DEWLALIGET (80 aa)).

It belongs to the NAD-dependent DNA ligase family. LigA subfamily. It depends on Mg(2+) as a cofactor. Requires Mn(2+) as cofactor.

It carries out the reaction NAD(+) + (deoxyribonucleotide)n-3'-hydroxyl + 5'-phospho-(deoxyribonucleotide)m = (deoxyribonucleotide)n+m + AMP + beta-nicotinamide D-nucleotide.. DNA ligase that catalyzes the formation of phosphodiester linkages between 5'-phosphoryl and 3'-hydroxyl groups in double-stranded DNA using NAD as a coenzyme and as the energy source for the reaction. It is essential for DNA replication and repair of damaged DNA. In Hyphomonas neptunium (strain ATCC 15444), this protein is DNA ligase.